The sequence spans 298 residues: Small ribosomal subunit protein uS3 (298 aa).

The 69-residue stretch at 38-106 (IRRRLSRGME…QVQLNILEVK (69 aa)) folds into the KH type-2 domain. The disordered stretch occupies residues 212-298 (KQKQQESEVR…EPRADEKTEG (87 aa)). A compositionally biased stretch (basic and acidic residues) spans 214-237 (KQQESEVRPPRGERGERGGRPERG). The segment covering 265–278 (GSAQSPEQAQTSGD) has biased composition (polar residues).

The protein belongs to the universal ribosomal protein uS3 family. Part of the 30S ribosomal subunit. Forms a tight complex with proteins S10 and S14.

Functionally, binds the lower part of the 30S subunit head. Binds mRNA in the 70S ribosome, positioning it for translation. This is Small ribosomal subunit protein uS3 from Saccharopolyspora erythraea (strain ATCC 11635 / DSM 40517 / JCM 4748 / NBRC 13426 / NCIMB 8594 / NRRL 2338).